Reading from the N-terminus, the 145-residue chain is UPF0260 protein VV2402 (145 aa).

Belongs to the UPF0260 family.

The sequence is that of UPF0260 protein VV2402 from Vibrio vulnificus (strain YJ016).